Here is a 514-residue protein sequence, read N- to C-terminus: MTILRNFLTCSALFLALPAAAQVVYLHESDGYNGAINNKSLEPKITCYPEGTSYIFLDDVRISNVKHDQEDAGVFINRSGNLFFMGNRCNFTFHNLMTEGFGAAISNRVGDTTLTLSNFSYLAFTSAPLLPQGQGAIYSLGSVMIENSEEVTFCGNYSSWSGAAIYTPYLLGSKASRPSVNLSGNRYLVFRDNVSQGYGGAISTHNLTLTTRGPSCFENNHAYHDVNSNGGAIAIAPGGSISISVKSGDLIFKGNTASQDGNTIHNSIHLQSGAQFKNLRAVSESGVYFYDPISHSESHKITDLVINAPEGKETYEGTISFSGLCLDDHEVCAENLTSTILQDVTLAGGTLSLSDGVTLQLHSFKQEASSTLTMSPGTTLLCSGDARVQNLHILIEDTDNFVPVRIRAEDKDALVSLEKLKVAFEAYWSVYDFPQFKEAFTIPLLELLGPSFDSLLLGETTLERTQVTTENDAVRGFWSLSWEEYPPSLDKDRRITPTKKTVFLTWNPEITSTP.

Residues 1-21 (MTILRNFLTCSALFLALPAAA) form the signal peptide.

It belongs to the PMP outer membrane protein family.

The protein resides in the secreted. It localises to the cell wall. Its subcellular location is the cell outer membrane. This is Probable outer membrane protein pmp12 (pmp12) from Chlamydia pneumoniae (Chlamydophila pneumoniae).